The primary structure comprises 400 residues: Nicotinate phosphoribosyltransferase (400 aa).

H220 is modified (phosphohistidine; by autocatalysis).

Belongs to the NAPRTase family. Post-translationally, transiently phosphorylated on a His residue during the reaction cycle. Phosphorylation strongly increases the affinity for substrates and increases the rate of nicotinate D-ribonucleotide production. Dephosphorylation regenerates the low-affinity form of the enzyme, leading to product release.

The enzyme catalyses nicotinate + 5-phospho-alpha-D-ribose 1-diphosphate + ATP + H2O = nicotinate beta-D-ribonucleotide + ADP + phosphate + diphosphate. Its pathway is cofactor biosynthesis; NAD(+) biosynthesis; nicotinate D-ribonucleotide from nicotinate: step 1/1. Catalyzes the synthesis of beta-nicotinate D-ribonucleotide from nicotinate and 5-phospho-D-ribose 1-phosphate at the expense of ATP. The polypeptide is Nicotinate phosphoribosyltransferase (Salmonella choleraesuis (strain SC-B67)).